The following is a 132-amino-acid chain: Small ribosomal subunit protein uS8 (132 aa).

This sequence belongs to the universal ribosomal protein uS8 family. In terms of assembly, part of the 30S ribosomal subunit. Contacts proteins S5 and S12.

Its function is as follows. One of the primary rRNA binding proteins, it binds directly to 16S rRNA central domain where it helps coordinate assembly of the platform of the 30S subunit. The sequence is that of Small ribosomal subunit protein uS8 from Micrococcus luteus (strain ATCC 4698 / DSM 20030 / JCM 1464 / CCM 169 / CCUG 5858 / IAM 1056 / NBRC 3333 / NCIMB 9278 / NCTC 2665 / VKM Ac-2230) (Micrococcus lysodeikticus).